Here is a 436-residue protein sequence, read N- to C-terminus: Trigger factor (436 aa).

The PPIase FKBP-type domain maps to 164-249; it reads GDTVVIDYKG…IHEIKEKQLP (86 aa).

This sequence belongs to the FKBP-type PPIase family. Tig subfamily.

The protein localises to the cytoplasm. The catalysed reaction is [protein]-peptidylproline (omega=180) = [protein]-peptidylproline (omega=0). Involved in protein export. Acts as a chaperone by maintaining the newly synthesized protein in an open conformation. Functions as a peptidyl-prolyl cis-trans isomerase. This chain is Trigger factor, found in Limosilactobacillus reuteri (strain DSM 20016) (Lactobacillus reuteri).